The chain runs to 2540 residues: Probable JmjC domain-containing histone demethylation protein 2C (2540 aa).

Polar residues predominate over residues 278–309 (TRAQANSPRPAMNSQAAVPKQNTHQQQQQRSI). The interval 278–478 (TRAQANSPRP…TVSDHNSNDL (201 aa)) is disordered. Phosphoserine is present on residues Ser-317 and Ser-320. Positions 323 to 342 (DEEKMKEEKYDYISRGENPK) are enriched in basic and acidic residues. Over residues 343 to 353 (GKNKHLMNKRR) the composition is skewed to basic residues. Basic and acidic residues predominate over residues 354–371 (KPEEDEKKLNMKRLRTDN). A phosphoserine mark is found at Ser-373 and Ser-376. The segment covering 373 to 382 (SDFSESSDSE) has biased composition (low complexity). 3 stretches are compositionally biased toward basic and acidic residues: residues 383–403 (NSNK…ELKN), 410–427 (NGEE…EETL), and 438–452 (QEDK…RKSV). The segment covering 464 to 478 (SSEQSTVSDHNSNDL) has biased composition (polar residues). 2 positions are modified to phosphoserine: Ser-475 and Ser-501. Thr-505 bears the Phosphothreonine mark. 7 positions are modified to phosphoserine: Ser-601, Ser-617, Ser-638, Ser-639, Ser-641, Ser-652, and Ser-943. The tract at residues 631–656 (VDTHKIKSSPSPEVVKPKITHSPDSV) is disordered. 2 disordered regions span residues 1242-1263 (GKVQ…SQAN) and 1614-1692 (NRRK…NSNT). The span at 1643 to 1652 (KRQPKPTYKK) shows a compositional bias: basic residues. The span at 1653-1669 (KQNDLQKRKGEIEEDLK) shows a compositional bias: basic and acidic residues. A C6-type zinc finger spans residues 1846-1871 (CDACEATLFNIHWVCQKCGFVVCLDC). A compositionally biased stretch (polar residues) spans 1971–1991 (PESQQQNTPPKSEKNGGSSPE). The interval 1971–2064 (PESQQQNTPP…LVSQNNEQGS (94 aa)) is disordered. Ser-1989 carries the phosphoserine modification. Positions 2016–2043 (AEQKAREEKKENKELTLENQIKEEREQD) are enriched in basic and acidic residues. The span at 2045–2064 (SESPNGRTSPLVSQNNEQGS) shows a compositional bias: polar residues. The LXXLL motif motif lies at 2066 to 2070 (LRDLL). Residues Lys-2132 and Lys-2136 each participate in a glycyl lysine isopeptide (Lys-Gly) (interchain with G-Cter in SUMO2) cross-link. Residues 2274–2498 (MPARYEDLLK…ESFHLTQELR (225 aa)) form the JmjC domain. Fe cation is bound by residues His-2336, Glu-2338, and His-2466.

It belongs to the JHDM2 histone demethylase family. Interacts specifically with the ligand-binding domain of the thyroid receptor (TR). Requires the presence of thyroid hormone for its interaction. It depends on Fe(2+) as a cofactor.

Its subcellular location is the nucleus. Probable histone demethylase that specifically demethylates 'Lys-9' of histone H3, thereby playing a central role in histone code. Demethylation of Lys residue generates formaldehyde and succinate. May be involved in hormone-dependent transcriptional activation, by participating in recruitment to androgen-receptor target genes. The sequence is that of Probable JmjC domain-containing histone demethylation protein 2C (JMJD1C) from Homo sapiens (Human).